Here is a 236-residue protein sequence, read N- to C-terminus: Thylakoid lumenal 17.4 kDa protein, chloroplastic (236 aa).

Pentapeptide repeat domains lie at 124–163 (TNLK…SFKG) and 169–208 (AVID…VFED).

Interacts in vitro with LTO1.

It is found in the plastid. Its subcellular location is the chloroplast thylakoid lumen. The sequence is that of Thylakoid lumenal 17.4 kDa protein, chloroplastic from Arabidopsis thaliana (Mouse-ear cress).